A 97-amino-acid polypeptide reads, in one-letter code: Large ribosomal subunit protein uL23 (97 aa).

This sequence belongs to the universal ribosomal protein uL23 family. In terms of assembly, part of the 50S ribosomal subunit. Contacts protein L29, and trigger factor when it is bound to the ribosome.

Its function is as follows. One of the early assembly proteins it binds 23S rRNA. One of the proteins that surrounds the polypeptide exit tunnel on the outside of the ribosome. Forms the main docking site for trigger factor binding to the ribosome. This Lactococcus lactis subsp. cremoris (strain SK11) protein is Large ribosomal subunit protein uL23.